The primary structure comprises 478 residues: 3-isopropylmalate dehydratase large subunit (478 aa).

Cysteine 359, cysteine 420, and cysteine 423 together coordinate [4Fe-4S] cluster.

It belongs to the aconitase/IPM isomerase family. LeuC type 1 subfamily. As to quaternary structure, heterodimer of LeuC and LeuD. [4Fe-4S] cluster serves as cofactor.

The catalysed reaction is (2R,3S)-3-isopropylmalate = (2S)-2-isopropylmalate. It functions in the pathway amino-acid biosynthesis; L-leucine biosynthesis; L-leucine from 3-methyl-2-oxobutanoate: step 2/4. Its function is as follows. Catalyzes the isomerization between 2-isopropylmalate and 3-isopropylmalate, via the formation of 2-isopropylmaleate. The chain is 3-isopropylmalate dehydratase large subunit from Psychrobacter sp. (strain PRwf-1).